A 273-amino-acid chain; its full sequence is HLA class II histocompatibility antigen, DO beta chain (273 aa).

A signal peptide spans 1 to 26 (MGSGWVPWVVALLVNLTRLDSSMTQG). Residues 27–120 (TDSPEDFVIQ…LGAPFTVGRK (94 aa)) form a beta-1 region. Topologically, residues 27–224 (TDSPEDFVIQ…RAQSEYSWRK (198 aa)) are extracellular. Disulfide bonds link Cys-41-Cys-105 and Cys-143-Cys-199. An N-linked (GlcNAc...) asparagine glycan is attached at Asn-45. The segment at 121 to 214 (VQPEVTVYPE…SLLSPVSVEW (94 aa)) is beta-2. The region spanning 123 to 213 (PEVTVYPERT…SSLLSPVSVE (91 aa)) is the Ig-like C1-type domain. Residues 215–224 (RAQSEYSWRK) form a connecting peptide region. The chain crosses the membrane as a helical span at residues 225 to 245 (MLSGIAAFLLGLIFLLVGIVI). Residues 246-273 (QLRAQKGYVRTQMSGNEVSRAVLLPQSC) are Cytoplasmic-facing.

It belongs to the MHC class II family. Heterodimer of an alpha chain (DOA) and a beta chain (DOB). Forms a heterotetrameric complex with an HLA-DM molecule during intracellular transport in endosomal/lysosomal compartments in B-cells.

It localises to the endosome membrane. The protein resides in the lysosome membrane. Important modulator in the HLA class II restricted antigen presentation pathway by interaction with the HLA-DM molecule in B-cells. Modifies peptide exchange activity of HLA-DM. In Homo sapiens (Human), this protein is HLA class II histocompatibility antigen, DO beta chain (HLA-DOB).